The sequence spans 452 residues: Chromosomal replication initiator protein DnaA (452 aa).

A domain I, interacts with DnaA modulators region spans residues 1–84; it reads MTENEQIFWN…SIEYVFEETQ (84 aa). The tract at residues 84 to 110 is domain II; sequence QSTSNSPQISQNKTAELATETLPFVQN. The domain III, AAA+ region stretch occupies residues 111–329; it reads DLNPKYSFDN…GALKDISLVA (219 aa). Positions 155, 157, 158, and 159 each coordinate ATP. Residues 330-452 form a domain IV, binds dsDNA region; sequence NFKKLDVITV…EMETIKNKIK (123 aa).

Belongs to the DnaA family. Oligomerizes as a right-handed, spiral filament on DNA at oriC.

The protein resides in the cytoplasm. Plays an essential role in the initiation and regulation of chromosomal replication. ATP-DnaA binds to the origin of replication (oriC) to initiate formation of the DNA replication initiation complex once per cell cycle. Binds the DnaA box (a 9 base pair repeat at the origin) and separates the double-stranded (ds)DNA. Forms a right-handed helical filament on oriC DNA; dsDNA binds to the exterior of the filament while single-stranded (ss)DNA is stabiized in the filament's interior. The ATP-DnaA-oriC complex binds and stabilizes one strand of the AT-rich DNA unwinding element (DUE), permitting loading of DNA polymerase. After initiation quickly degrades to an ADP-DnaA complex that is not apt for DNA replication. Binds acidic phospholipids. This chain is Chromosomal replication initiator protein DnaA, found in Streptococcus mutans serotype c (strain ATCC 700610 / UA159).